A 553-amino-acid polypeptide reads, in one-letter code: Neutral amino acid transporter B(0) (553 aa).

Residue Met1 is modified to N-acetylmethionine. Residues 1-50 (MAVDPPKADPKGVAVDSSRRCPALGSREDQSAKAGGCCGSRDRVRRCIRA) are Cytoplasmic-facing. The chain crosses the membrane as a helical span at residues 51–80 (NLLVLLTVAAVVAGVGLGLGVSAAGGADAL). Topologically, residues 81-93 (GPARLTRFAFPGE) are extracellular. The chain crosses the membrane as a helical span at residues 94–115 (LLLRLLKMIILPLVVCSLIGGA). The Cytoplasmic segment spans residues 116–129 (ASLDPSALGRVGAW). The helical transmembrane segment at 130–152 (ALLFFLVTTLLASALGVGLALAL) threads the bilayer. The Extracellular portion of the chain corresponds to 153-236 (KPGAAVTAIT…INSTMVQLLC (84 aa)). 2 N-linked (GlcNAc...) asparagine glycosylation sites follow: Asn165 and Asn228. Residues 237-260 (EVEGMNILGLVVFAIVFGVALRKL) traverse the membrane as a helical segment. The Cytoplasmic portion of the chain corresponds to 261-269 (GPEGELLIR). A helical membrane pass occupies residues 270-297 (FFNSFNDATMVLVSWIMWYAPVGILFLV). The Extracellular portion of the chain corresponds to 298–318 (ASKIVEMKDVRQLFISLGKYI). Residues 319 to 340 (LCCLLGHAIHGLLVLPLIYFLF) traverse the membrane as a helical segment. The Cytoplasmic portion of the chain corresponds to 341–345 (TRKNP). Residues 346–376 (YRFLWGIMTPLATAFGTSSSSATLPLMMKCV) constitute an intramembrane region (discontinuously helical). The Cytoplasmic portion of the chain corresponds to 377-385 (EEKNGVAKH). Residues 386–412 (ISRFILPIGATVNMDGAALFQCVAAVF) form a helical membrane-spanning segment. Residues Gly394, Thr396, and Asn398 each coordinate Na(+). Residues 413 to 425 (IAQLNGVSLDFVK) are Extracellular-facing. Residues 426–459 (IITILVTATASSVGAAGIPAGGVLTLAIILEAVS) constitute an intramembrane region (discontinuously helical). Residues 460-472 (LPVKDISLILAVD) are Extracellular-facing. A helical transmembrane segment spans residues 473-494 (WLVDRSCTVLNVEGDAFGAGLL). The Na(+) site is built by Asn483 and Asp487. The Cytoplasmic segment spans residues 495–553 (QSYVDRTKMPSSEPELIQVKNEVSLNPLPLATEEGNPLLKQYQGPTGDSSATFEKESVM). Phosphoserine occurs at positions 505, 506, 518, 543, and 551. Positions 531–553 (PLLKQYQGPTGDSSATFEKESVM) are disordered. Positions 537 to 546 (QGPTGDSSAT) are enriched in polar residues.

This sequence belongs to the dicarboxylate/amino acid:cation symporter (DAACS) (TC 2.A.23) family. SLC1A5 subfamily. As to quaternary structure, homotrimer. Highly expressed in adipose tissue. Detected in lung, skeletal muscle, large intestine, kidney and testis. Expressed in lung, brain, kidney and neural retina (at protein level). Expressed in Mueller cells (at protein level).

The protein localises to the cell membrane. It localises to the melanosome. The enzyme catalyses L-glutamine(out) + L-serine(in) + Na(+)(out) = L-glutamine(in) + L-serine(out) + Na(+)(in). It carries out the reaction L-glutamine(in) + L-serine(out) + Na(+)(out) = L-glutamine(out) + L-serine(in) + Na(+)(in). It catalyses the reaction L-threonine(in) + L-glutamine(out) + Na(+)(out) = L-threonine(out) + L-glutamine(in) + Na(+)(in). The catalysed reaction is L-threonine(out) + L-glutamine(in) + Na(+)(out) = L-threonine(in) + L-glutamine(out) + Na(+)(in). The enzyme catalyses L-asparagine(in) + L-glutamine(out) + Na(+)(out) = L-asparagine(out) + L-glutamine(in) + Na(+)(in). It carries out the reaction L-asparagine(out) + L-glutamine(in) + Na(+)(out) = L-asparagine(in) + L-glutamine(out) + Na(+)(in). It catalyses the reaction L-glutamine(in) + L-alanine(out) + Na(+)(out) = L-glutamine(out) + L-alanine(in) + Na(+)(in). The catalysed reaction is L-valine(out) + L-glutamine(in) + Na(+)(out) = L-valine(in) + L-glutamine(out) + Na(+)(in). The enzyme catalyses L-glutamine(in) + L-methionine(out) + Na(+)(out) = L-glutamine(out) + L-methionine(in) + Na(+)(in). It carries out the reaction L-glutamine(in) + L-glutamate(out) + Na(+)(out) + H(+)(out) = L-glutamine(out) + L-glutamate(in) + Na(+)(in) + H(+)(in). It catalyses the reaction D-serine(in) + L-glutamine(out) + Na(+)(out) = D-serine(out) + L-glutamine(in) + Na(+)(in). The catalysed reaction is D-serine(in) + L-alanine(out) + Na(+)(out) = D-serine(out) + L-alanine(in) + Na(+)(in). The enzyme catalyses nitrate(in) = nitrate(out). It carries out the reaction iodide(out) = iodide(in). It catalyses the reaction thiocyanate(in) = thiocyanate(out). Its activity is regulated as follows. Down-regulated at acidic pH, with the exception of L-glutamate transport which is up-regulated instead. Functionally, sodium-coupled antiporter of neutral amino acids. In a tri-substrate transport cycle, exchanges neutral amino acids between the extracellular and intracellular compartments, coupled to the inward cotransport of at least one sodium ion. The preferred substrate is the essential amino acid L-glutamine, a precursor for biosynthesis of proteins, nucleotides and amine sugars as well as an alternative fuel for mitochondrial oxidative phosphorylation. Exchanges L-glutamine with other neutral amino acids such as L-serine, L-threonine and L-asparagine in a bidirectional way. Provides L-glutamine to proliferating stem and activated cells driving the metabolic switch toward cell differentiation. The transport cycle is usually pH-independent, with the exception of L-glutamate. Transports extracellular L-glutamate coupled to the cotransport of one proton and one sodium ion in exchange for intracellular L-glutamine counter-ion. May provide for L-glutamate uptake in glial cells regulating glutamine/glutamate cycle in the nervous system. Can transport D-amino acids. Mediates D-serine release from the retinal glia potentially affecting NMDA receptor function in retinal neurons. Displays sodium- and amino acid-dependent but uncoupled channel-like anion conductance with a preference SCN(-) &gt;&gt; NO3(-) &gt; I(-) &gt; Cl(-). Through binding of the fusogenic protein syncytin-1/ERVW-1 may mediate trophoblasts syncytialization, the spontaneous fusion of their plasma membranes, an essential process in placental development. This chain is Neutral amino acid transporter B(0) (Slc1a5), found in Mus musculus (Mouse).